A 252-amino-acid polypeptide reads, in one-letter code: MRAKRIIPCLDVHGGRVVKGTNFINLRDAGDPVEFAAFYDKEGADELVFLDISATSEERQTMVEVVRQTAREVSIPFAVGGGIRTLDDISNILKAGADKVSMNSAAIRDPQIIKEGAVKFGSQCIVVAIDARRISENSWEVYIDGGQVATGMDAREWARKVESLGAGEILLTSMDKDGTKDGYDIELTAAISEQVGIPVIASGGAGKLEHLYEAITQGKADAVLCASIFHFREYTVRQAKEYLAAKGVAVRL.

Catalysis depends on residues aspartate 11 and aspartate 130.

This sequence belongs to the HisA/HisF family. In terms of assembly, heterodimer of HisH and HisF.

The protein localises to the cytoplasm. The enzyme catalyses 5-[(5-phospho-1-deoxy-D-ribulos-1-ylimino)methylamino]-1-(5-phospho-beta-D-ribosyl)imidazole-4-carboxamide + L-glutamine = D-erythro-1-(imidazol-4-yl)glycerol 3-phosphate + 5-amino-1-(5-phospho-beta-D-ribosyl)imidazole-4-carboxamide + L-glutamate + H(+). The protein operates within amino-acid biosynthesis; L-histidine biosynthesis; L-histidine from 5-phospho-alpha-D-ribose 1-diphosphate: step 5/9. Its function is as follows. IGPS catalyzes the conversion of PRFAR and glutamine to IGP, AICAR and glutamate. The HisF subunit catalyzes the cyclization activity that produces IGP and AICAR from PRFAR using the ammonia provided by the HisH subunit. The chain is Imidazole glycerol phosphate synthase subunit HisF from Syntrophomonas wolfei subsp. wolfei (strain DSM 2245B / Goettingen).